Here is a 245-residue protein sequence, read N- to C-terminus: Endonuclease III (245 aa).

Positions 119-138 (MDKLVTLPGVGRKTANVILG) constitute a HhH domain. C198, C205, C208, and C214 together coordinate [4Fe-4S] cluster.

Belongs to the Nth/MutY family. The cofactor is [4Fe-4S] cluster.

The enzyme catalyses 2'-deoxyribonucleotide-(2'-deoxyribose 5'-phosphate)-2'-deoxyribonucleotide-DNA = a 3'-end 2'-deoxyribonucleotide-(2,3-dehydro-2,3-deoxyribose 5'-phosphate)-DNA + a 5'-end 5'-phospho-2'-deoxyribonucleoside-DNA + H(+). In terms of biological role, DNA repair enzyme that has both DNA N-glycosylase activity and AP-lyase activity. The DNA N-glycosylase activity releases various damaged pyrimidines from DNA by cleaving the N-glycosidic bond, leaving an AP (apurinic/apyrimidinic) site. The AP-lyase activity cleaves the phosphodiester bond 3' to the AP site by a beta-elimination, leaving a 3'-terminal unsaturated sugar and a product with a terminal 5'-phosphate. Has a preference for oxidized pyrimidines, such as thymine glycol (prefers 5S isomers) 5,6-dihydrouracil:G, 5-hydroxyuracil:G, 5-hydroxycytosine:G and urea:A. Cleaves ssDNA containing an AP site. The polypeptide is Endonuclease III (Mycobacterium tuberculosis (strain ATCC 25618 / H37Rv)).